The primary structure comprises 254 residues: Type III pantothenate kinase (254 aa).

Residue D6–V13 coordinates ATP. Substrate contacts are provided by residues Y100 and G107–R110. Residue D109 is the Proton acceptor of the active site. D129 contributes to the K(+) binding site. Residue T132 coordinates ATP. T184 contacts substrate.

This sequence belongs to the type III pantothenate kinase family. Homodimer. NH4(+) is required as a cofactor. It depends on K(+) as a cofactor.

Its subcellular location is the cytoplasm. It catalyses the reaction (R)-pantothenate + ATP = (R)-4'-phosphopantothenate + ADP + H(+). It functions in the pathway cofactor biosynthesis; coenzyme A biosynthesis; CoA from (R)-pantothenate: step 1/5. Functionally, catalyzes the phosphorylation of pantothenate (Pan), the first step in CoA biosynthesis. The chain is Type III pantothenate kinase from Halalkalibacterium halodurans (strain ATCC BAA-125 / DSM 18197 / FERM 7344 / JCM 9153 / C-125) (Bacillus halodurans).